Consider the following 133-residue polypeptide: NLP effector protein 14 (133 aa).

The short motif at 1 to 9 (MYSWYFPKD) is the Conserved undecapeptide motifI I element. A Hepta-peptide GHRHDWE motif II motif is present at residues 16-22 (GHRHDWE).

This sequence belongs to the Necrosis inducing protein (NPP1) family.

Its subcellular location is the secreted. Functionally, secreted effector that contributes strongly to virulence during infection by P.capsici. Causes large necrotic areas in both host C.annuum and non-host N.benthamiana. The polypeptide is NLP effector protein 14 (Phytophthora capsici).